A 367-amino-acid chain; its full sequence is Biotin synthase (367 aa).

The Radical SAM core domain occupies 67 to 291; it reads NAVQISTLLS…IAVTRICCPS (225 aa). Positions 82, 86, and 89 each coordinate [4Fe-4S] cluster. The [2Fe-2S] cluster site is built by cysteine 128, cysteine 159, cysteine 219, and arginine 295.

The protein belongs to the radical SAM superfamily. Biotin synthase family. As to quaternary structure, homodimer. It depends on [4Fe-4S] cluster as a cofactor. Requires [2Fe-2S] cluster as cofactor.

The catalysed reaction is (4R,5S)-dethiobiotin + (sulfur carrier)-SH + 2 reduced [2Fe-2S]-[ferredoxin] + 2 S-adenosyl-L-methionine = (sulfur carrier)-H + biotin + 2 5'-deoxyadenosine + 2 L-methionine + 2 oxidized [2Fe-2S]-[ferredoxin]. The protein operates within cofactor biosynthesis; biotin biosynthesis; biotin from 7,8-diaminononanoate: step 2/2. In terms of biological role, catalyzes the conversion of dethiobiotin (DTB) to biotin by the insertion of a sulfur atom into dethiobiotin via a radical-based mechanism. This chain is Biotin synthase, found in Psychrobacter sp. (strain PRwf-1).